Reading from the N-terminus, the 2364-residue chain is Spectrin beta chain, non-erythrocytic 1 (2364 aa).

T2 is subject to N-acetylthreonine. Residues 2–275 are actin-binding; the sequence is TTTVATDYDN…IITYVVTYYH (274 aa). Phosphoserine occurs at positions 14 and 36. Calponin-homology (CH) domains lie at 54–158 and 173–278; these read AVQK…LRFQ and KSAK…HYFS. K90 carries the post-translational modification N6-acetyllysine. S228 is modified (phosphoserine). Spectrin repeat units follow at residues 303 to 411, 423 to 525, 530 to 636, 639 to 742, 745 to 847, 850 to 952, 957 to 1060, 1063 to 1166, 1170 to 1258, 1276 to 1376, 1381 to 1482, 1486 to 1590, 1592 to 1696, 1698 to 1801, and 1805 to 1907; these read MIEK…LALR, LARR…QRLE, LQKI…RLEE, RLWK…RLEE, LLHQ…ALQD, ALYK…DALL, IQNY…SLGE, KLQQ…NLLS, AYQQ…DRHR, DLQK…AQRL, KAEL…HNLL, EIHQ…RLEE, HRAQ…KLDE, HRLF…TQIL, and YELH…RVRL. Phosphoserine occurs at positions 817, 825, 903, 1057, 1076, 1079, and 1237. Phosphoserine is present on residues S1388, S1447, and S1557. An interaction with ANK2 region spans residues 1563-2093; it reads IRQRLADLKQ…LLEVRRQQEE (531 aa). Y1805 is subject to Phosphotyrosine. 3 positions are modified to N6-acetyllysine: K1815, K1913, and K1989. Spectrin repeat units lie at residues 1914–2014 and 2018–2097; these read FRFF…EWLR and EVHQ…EERK. Residues 2089-2196 form a disordered region; sequence RQQEEEERKR…TLPARTQETP (108 aa). Phosphoserine occurs at positions 2102, 2128, and 2138. Over residues 2115-2131 the composition is skewed to polar residues; that stretch reads SQQQWDTSKGEQVSQNG. Polar residues predominate over residues 2145–2166; sequence VDTSEMVNGATEQRTSSKESSP. T2147 is subject to Phosphothreonine. Position 2148 is a phosphoserine (S2148). The interval 2149–2177 is mediates interaction with CAMSAP1; that stretch reads EMVNGATEQRTSSKESSPIPSPTSDRKAK. T2159 is modified (phosphothreonine). Residues S2160, S2161, S2164, S2165, and S2169 each carry the phosphoserine modification. T2171 carries the post-translational modification Phosphothreonine. Phosphoserine is present on residues S2172 and S2184. The segment covering 2184-2196 has biased composition (polar residues); it reads SAATLPARTQETP. A phosphothreonine mark is found at T2187 and T2195. A PH domain is found at 2197–2307; sequence SAQMEGFLNR…WIQAISSAIS (111 aa). Positions 2309–2364 are disordered; it reads DKHEVSASTQSTPASSRAQTLPTSVVTITSESSPGKREKDKEKDKEKRFSLFGKKK. 2 positions are modified to phosphoserine: S2314 and S2319. Over residues 2314–2341 the composition is skewed to polar residues; it reads SASTQSTPASSRAQTLPTSVVTITSESS. T2320 bears the Phosphothreonine mark. O-linked (GlcNAc) serine glycosylation is present at S2324. T2328 carries the phosphothreonine modification. Phosphoserine is present on residues S2340 and S2341. Over residues 2342–2357 the composition is skewed to basic and acidic residues; the sequence is PGKREKDKEKDKEKRF.

This sequence belongs to the spectrin family. Interacts with CAMSAP1. Interacts with ANK2. Interacts with CPNE4 (via VWFA domain). Like erythrocyte spectrin, the spectrin-like proteins are capable to form dimers which can further associate to tetramers. Can form heterodimers with SPTAN1. Isoform Short cannot bind to the axonal protein fodaxin. As to expression, isoform 2 is present in brain, lung and kidney (at protein level).

It localises to the cytoplasm. The protein resides in the cytoskeleton. The protein localises to the myofibril. Its subcellular location is the sarcomere. It is found in the m line. It localises to the cytosol. The protein resides in the cell membrane. Functionally, fodrin, which seems to be involved in secretion, interacts with calmodulin in a calcium-dependent manner and is thus candidate for the calcium-dependent movement of the cytoskeleton at the membrane. Plays a critical role in central nervous system development and function. The polypeptide is Spectrin beta chain, non-erythrocytic 1 (SPTBN1) (Homo sapiens (Human)).